We begin with the raw amino-acid sequence, 526 residues long: MFNVDTPALITFILLIVVGALGGALVGYFIRVAQHEKSLRLAREEAERIIEDGKKEADRTKREMVFEAKQEILTLRKEFDEDIKDRRQIVMNLEEKATQRENALNQRSQYLDKREIGLDAKEERHNERKEQLDIQYSKVEELIKEQEEKLSSISALSREQARELIMAQVRDSISNEIAAYIRDEEDNAKSIAQNKSKEILSLAMQKYAAETTSERTVTVVEIPNEDMKGRIIGKEGRNIRSLEALTGVDLIIDDTPEAVVLSGFDPVRREVAKRALTILVQDGRIHPGRIEEVVERARTEIDMFIREAGEEAVFKTGVGKVHPDIIKLLGRMTFRTSYGQNVLKHSIEVAFLAGKLAAEIGENEMLARRAGLFHDIGKAIDHEVEGSHVSIGVELMSRYKEPKEVIDAIASHHGDSEPESIIAVLVAAADALSAARPGARSESMDSYMKRLTQLEEISNDVTGVDKAYAIQAGREVRVMVLPDKVDDLGLINIARTIKEKIEAQMTYPGTIKVTVIREKRATDVAK.

Residues isoleucine 10–isoleucine 30 form a helical membrane-spanning segment. Positions threonine 216 to leucine 279 constitute a KH domain. Residues valine 342 to alanine 435 enclose the HD domain.

It belongs to the RNase Y family.

The protein localises to the cell membrane. In terms of biological role, endoribonuclease that initiates mRNA decay. The chain is Ribonuclease Y from Acholeplasma laidlawii (strain PG-8A).